Consider the following 65-residue polypeptide: Photosystem II reaction center protein J (65 aa).

The helical transmembrane segment at 35–55 (LWLVATAGGIAVIFVLGIFFY) threads the bilayer.

This sequence belongs to the PsbJ family. As to quaternary structure, PSII is composed of 1 copy each of membrane proteins PsbA, PsbB, PsbC, PsbD, PsbE, PsbF, PsbH, PsbI, PsbJ, PsbK, PsbL, PsbM, PsbT, PsbX, PsbY, Psb30/Ycf12, peripheral proteins PsbO, CyanoQ (PsbQ), PsbU, PsbV and a large number of cofactors. It forms dimeric complexes.

Its subcellular location is the cellular thylakoid membrane. Functionally, one of the components of the core complex of photosystem II (PSII). PSII is a light-driven water:plastoquinone oxidoreductase that uses light energy to abstract electrons from H(2)O, generating O(2) and a proton gradient subsequently used for ATP formation. It consists of a core antenna complex that captures photons, and an electron transfer chain that converts photonic excitation into a charge separation. This Prochlorococcus marinus (strain MIT 9312) protein is Photosystem II reaction center protein J.